The primary structure comprises 670 residues: uncharacterized protein (670 aa).

The interval Pro-53 to Pro-83 is disordered. A run of 27 repeats spans residues Ala-143–Thr-158, Ala-171–Thr-186, Ala-200–Pro-214, Ala-215–Pro-233, Ala-234–Pro-252, Ala-253–Thr-268, Thr-279–Pro-293, Ala-294–Thr-309, Thr-320–Pro-334, Ala-335–Pro-349, Ala-362–Pro-376, Ala-377–Pro-391, Ala-392–Pro-406, Ala-407–Pro-421, Ala-422–Pro-436, Ala-437–Thr-452, Val-464–Thr-477, Ala-478–Thr-493, Ala-504–Thr-517, Ala-518–Thr-531, Ala-532–Thr-545, Ala-546–Thr-559, Ala-560–Thr-573, Ala-574–Thr-587, Ala-588–Thr-601, Ala-602–Thr-615, and Ala-616–Thr-629. Residues Pro-187–Asn-225 are disordered. The segment covering Ala-205–Asn-225 has biased composition (low complexity). Positions Gly-339–Thr-395 are disordered. Over residues Asp-342–Ala-362 the composition is skewed to polar residues. A compositionally biased stretch (low complexity) spans Met-363–Thr-395. 2 stretches are compositionally biased toward low complexity: residues Gly-471–Gly-482 and Thr-490–Thr-503. The tract at residues Gly-471–Thr-503 is disordered. The span at Gly-525–Gly-634 shows a compositional bias: low complexity. Residues Gly-525 to Arg-670 are disordered. Over residues Gly-638–Gly-654 the composition is skewed to basic residues.

This is an uncharacterized protein from Ictalurid herpesvirus 1 (strain Auburn) (IcHV-1).